We begin with the raw amino-acid sequence, 262 residues long: Aminoglycoside (3'') (9) adenylyltransferase (262 aa).

It catalyses the reaction streptomycin + ATP = 3''-O-adenylylstreptomycin + diphosphate. The catalysed reaction is spectinomycin + ATP = 9-O-adenylylspectinomycin + diphosphate. In terms of biological role, mediates bacterial resistance to the antibiotics streptomycin and spectinomycin. This is Aminoglycoside (3'') (9) adenylyltransferase from Shigella flexneri.